The primary structure comprises 174 residues: Ribosome maturation factor RimP (174 aa).

It belongs to the RimP family.

The protein resides in the cytoplasm. In terms of biological role, required for maturation of 30S ribosomal subunits. This chain is Ribosome maturation factor RimP, found in Acinetobacter baumannii (strain AB307-0294).